A 235-amino-acid polypeptide reads, in one-letter code: 2-C-methyl-D-erythritol 4-phosphate cytidylyltransferase (235 aa).

It belongs to the IspD/TarI cytidylyltransferase family. IspD subfamily.

The catalysed reaction is 2-C-methyl-D-erythritol 4-phosphate + CTP + H(+) = 4-CDP-2-C-methyl-D-erythritol + diphosphate. The protein operates within isoprenoid biosynthesis; isopentenyl diphosphate biosynthesis via DXP pathway; isopentenyl diphosphate from 1-deoxy-D-xylulose 5-phosphate: step 2/6. In terms of biological role, catalyzes the formation of 4-diphosphocytidyl-2-C-methyl-D-erythritol from CTP and 2-C-methyl-D-erythritol 4-phosphate (MEP). The protein is 2-C-methyl-D-erythritol 4-phosphate cytidylyltransferase of Ectopseudomonas mendocina (strain ymp) (Pseudomonas mendocina).